Here is a 427-residue protein sequence, read N- to C-terminus: MSLCLRLLCSVCGAAALRVPLGVSSLRALSGSAEGFRPARVAVVAKTTRYEFEQQRYRSSGLSEAELRDLLALKGSSYNGLLQRYNIHSENVEHIVQSLRKEGTDVRLVKRRDYDEETVRWADAIISAGGDGTMLLAASKVQDRFKPVIGVNTDPERSEGHLCLPVRYTWSFPEALQKLYRGEFRWQWRQRIRLYLEGTGINLTPVDLHEQQLSLEQHNKAHNSQLEQKSVAVSGPQLLPVRALNEVFIGESLSSRVNYKSCKPRFTFSLHRASYYEISVDDGPWEKQKSSGLNVCTGTGSKAWSYNINKMSSQSVEELLNIVRQHKSLNVSLDSDVIQRVTNAYNDSLVYNPEEPKMFFSVREPIANRVFSSSQQRGFTSKVCVRSRCWDACMVVDGGTSFEFNDGAIVSIVMDDQDALCTVLLDD.

The transit peptide at 1-33 (MSLCLRLLCSVCGAAALRVPLGVSSLRALSGSA) directs the protein to the mitochondrion.

Belongs to the NAD kinase family. Homodimer.

It localises to the mitochondrion. The enzyme catalyses NAD(+) + ATP = ADP + NADP(+) + H(+). In terms of biological role, mitochondrial NAD(+) kinase that phosphorylates NAD(+) to yield NADP(+). Can use both ATP or inorganic polyphosphate as the phosphoryl donor. This chain is NAD kinase 2, mitochondrial (nadk2), found in Xenopus tropicalis (Western clawed frog).